The primary structure comprises 159 residues: Mitotic-spindle organizing protein 2 (159 aa).

The tract at residues 87–159 (LASDPQDSVP…SGKSNSRSSP (73 aa)) is disordered. The segment covering 91–105 (PQDSVPISLSTSTSE) has biased composition (polar residues). Arg111 is modified (omega-N-methylarginine). Residue Ser153 is modified to Phosphoserine.

It belongs to the MOZART2 family. As to quaternary structure, associates with the gamma-tubulin ring complex (gTuRC) consisting of TUBGCP2, TUBGCP3, TUBGCP4, TUBGCP5 and TUBGCP6 and gamma-tubulin TUBG1 or TUBG2; within the complex, interacts with TUBGCP2; the interaction plays a role in gTuRC activation.

The protein localises to the cytoplasm. Its subcellular location is the cytoskeleton. It is found in the microtubule organizing center. The protein resides in the centrosome. It localises to the spindle. Functionally, required for the recruitment and the assembly of the gamma-tubulin ring complex (gTuRC) at the centrosome. The gTuRC regulates the minus-end nucleation of alpha-beta tubulin heterodimers that grow into microtubule protafilaments, a critical step in centrosome duplication and spindle formation. This Mus musculus (Mouse) protein is Mitotic-spindle organizing protein 2 (Mzt2).